The chain runs to 625 residues: Somatic embryogenesis receptor kinase 1 (625 aa).

A signal peptide spans 1–26; sequence MESSYVVFILLSLILLPNHSLWLASA. Over 27–238 the chain is Extracellular; that stretch reads NLEGDALHTL…STPSGYGITG (212 aa). Cysteines 58 and 65 form a disulfide. 2 leucine-rich repeat receptor-like protein kinase binding regions span residues 59-78 and 97-102; these read TWFHVTCNNENSVIRVDLGN and YLELYS. 61–62 is a brassinolide binding site; the sequence is FH. LRR repeat units lie at residues 92–116, 118–140, 141–164, and 165–189; these read LKNLQYLELYSNNITGPIPSNLGNL, NLVSLDLYLNSFSGPIPESLGKL, SKLRFLRLNNNSLTGSIPMSLTNI, and TTLQVLDLSNNRLSGSVPDNGSFSL. Asparagine 104 and asparagine 115 each carry an N-linked (GlcNAc...) asparagine glycan. 2 leucine-rich repeat receptor-like protein kinase binding regions span residues 123-126 and 145-147; these read DLYL and FLR. Asparagine 150, asparagine 163, and asparagine 184 each carry an N-linked (GlcNAc...) asparagine glycan. Positions 171–194 are leucine-rich repeat receptor-like protein kinase binding; sequence DLSNNRLSGSVPDNGSFSLFTPIS. A disulfide bond links cysteine 202 and cysteine 210. Residues 239–259 traverse the membrane as a helical segment; the sequence is AIAGGVAAGAALLFAAPAIAF. Residues 260–625 lie on the Cytoplasmic side of the membrane; the sequence is AWWRRRKPLD…LHAVELSGPR (366 aa). Phosphoserine is present on residues serine 291, serine 299, and serine 303. Residues 302-589 form the Protein kinase domain; it reads FSNKNILGRG…GLAEKWDEWQ (288 aa). 308–316 contributes to the ATP binding site; that stretch reads LGRGGFGKV. A Phosphothreonine modification is found at threonine 325. Lysine 330 contributes to the ATP binding site. Phosphothreonine is present on residues threonine 337 and threonine 346. 4 positions are modified to phosphoserine: serine 352, serine 383, serine 386, and serine 394. Threonine 402 carries the post-translational modification Phosphothreonine. Serine 415 is modified (phosphoserine). The active-site Proton acceptor is aspartate 429. At tyrosine 456 the chain carries Phosphotyrosine. Residues threonine 459, threonine 462, threonine 463, and threonine 468 each carry the phosphothreonine modification. Tyrosine 476 carries the phosphotyrosine modification. Position 478 is a phosphoserine (serine 478). Phosphothreonine is present on threonine 479. Serine 483 is modified (phosphoserine). At threonine 541 the chain carries Phosphothreonine. Tyrosine 543 is modified (phosphotyrosine). Position 559 is a phosphothreonine (threonine 559). Phosphoserine is present on residues serine 606 and serine 612. Threonine 613 is subject to Phosphothreonine. Tyrosine 614 bears the Phosphotyrosine mark. Serine 622 carries the post-translational modification Phosphoserine.

It belongs to the protein kinase superfamily. Ser/Thr protein kinase family. Monomer, homo- and heterodimer. Interacts with KAPP, CDC48A, GRF6 or GRF7, SERK2, BRI1 and SERK3/BAK1 to form the SERK1 signaling complex. Bind to BRI1 in a brassinolide-dependent manner. Heterodimer with PSKR1. Interacts with the EF-Tu receptor EFR and FLS2 in a specific ligand-induced manner. Interacts with ERECTA in a EPF2-induced manner. Interacts with ERL1 in a EPF1-induced manner. Interacts with TMM. In the presence of the signal peptide RGF1, interacts with RGI1/RGFR4/RCH2, RGI2/RGFR3/RCH1, RGI3/RGFR1, RGI4/RGFR2/SKM2 and RGI5/RGFR5. The cofactor is Mg(2+). In terms of processing, glycosylated. Important for targeting to the plasma membrane. Intermolecular autophosphorylation. The catalytic activity of SERK1 depends on the presence of a phosphorylated Thr residue in SERK1. The phosphorylation is induced by brassinosteroids. Transphosphorylation by BRI1 occurs only on Ser-299 and Thr-462. Dephosphorylation of threonine residues by the kinase-associated protein phosphatase (KAPP) is involved in SERK1 endocytosis. In terms of tissue distribution, expressed in flowers, tapetum, developing microspores, all cells of the embryo sac, provascular strands and developing vascular bundles. Low expression in adult vascular tissue. Detected in root meristem.

It is found in the cell membrane. The protein resides in the endoplasmic reticulum membrane. It catalyses the reaction L-seryl-[protein] + ATP = O-phospho-L-seryl-[protein] + ADP + H(+). The catalysed reaction is L-threonyl-[protein] + ATP = O-phospho-L-threonyl-[protein] + ADP + H(+). The enzyme catalyses L-tyrosyl-[protein] + ATP = O-phospho-L-tyrosyl-[protein] + ADP + H(+). With respect to regulation, inhibited by manganese. Dual specificity kinase acting on both serine/threonine- and tyrosine-containing substrates. Phosphorylates BRI1 on 'Ser-887' and CDC48 on at least one threonine residue and on 'Ser-41'. Confers embryogenic competence. Acts redundantly with SERK2 as a control point for sporophytic development controlling male gametophyte production. Involved in the brassinolide signaling pathway. Probably required during small peptide (e.g. RGF1) signaling. Involved in the perception of phytosulfokine and subsequent signal transduction. Acts as a RLK5 coreceptor and promotes high-affinity IDA sensing, thus being a positive regulator of floral abscission. The polypeptide is Somatic embryogenesis receptor kinase 1 (Arabidopsis thaliana (Mouse-ear cress)).